The following is a 366-amino-acid chain: MGKLIMSIDQRLQLIMRNTAEVITIDELRKKLESDEKLKGYIGFEPSGLFHIGWLIWTQKVKDLVEAGINMTLLRAAWHAWINDKLGGDMNLIKMAADYAVEVIKNYGVDVGKLNIVDADDIVKEKDYWALVIKVAKNASLARIKRALTIMGRRAEEAEIDASKLIYPAMQVSDIFYLDLDIALGGTDQRKAHMLARDVAEKMGKKKIVSIHTPLLVGLQGGQRMNITEGMEEDDIQAEIKMSKSKPESAIFVNDSREDVERKIMGAYCPKGVAENNPILQILKYIIFPRYNFVKIERDIKYGGDVEFKDYEELERTYIEGKIHPMDLKKTTARKLNEILEPIRKSLEKKPEFEEMIQKISKSVTR.

L-tyrosine-binding residues include Y41, Y167, Q171, D174, and Q189. Residues 241-245 (KMSKS) carry the 'KMSKS' region motif. K244 contacts ATP.

The protein belongs to the class-I aminoacyl-tRNA synthetase family. TyrS type 4 subfamily. As to quaternary structure, homodimer.

The protein localises to the cytoplasm. The catalysed reaction is tRNA(Tyr) + L-tyrosine + ATP = L-tyrosyl-tRNA(Tyr) + AMP + diphosphate + H(+). Its function is as follows. Catalyzes the attachment of tyrosine to tRNA(Tyr) in a two-step reaction: tyrosine is first activated by ATP to form Tyr-AMP and then transferred to the acceptor end of tRNA(Tyr). This chain is Tyrosine--tRNA ligase, found in Saccharolobus solfataricus (strain ATCC 35092 / DSM 1617 / JCM 11322 / P2) (Sulfolobus solfataricus).